The chain runs to 133 residues: Salivary cystatin-L (133 aa).

The first 19 residues, 1–19 (MTSTFALVLLLGGMAVCVA), serve as a signal peptide directing secretion. The region spanning 30 to 118 (ANHQANPEFL…RTCTTVVFEN (89 aa)) is the Cystatin domain. 2 disulfides stabilise this stretch: C89–C100 and C111–C130.

It belongs to the cystatin family. As to quaternary structure, monomer. Can form homodimers in vitro, but probably not in vivo. Homodimers are predicted to be inactive; dimerization disrupts the interaction with target proteases. Detected in saliva (at protein level). Detected in salivary gland and midgut.

The protein resides in the secreted. Contributes to the suppression of the host's immune response to tick salivary proteins and is important for successful feeding on hosts. Inhibitor of cysteine proteinases. Inhibits host papain and cathepsin L (CTSL) (in vitro). Inhibits host cathepsin S (CTSS) (in vitro). Inhibits host CTSV and CTSC, but to a lesser degree (in vitro). Inhibits host immune responses via its inhibition of host cathepsins. Inhibits differentiation of host dendritic cells. Inhibits proliferation of host T-cells in response to antigen stimulus. Down-regulates IL1B production by host mast cells, and this then leads to impaired activation of IL1R1, resulting in decreased IL9 production. Inhibits host inflammatory reactions and recruitment of host neutrophils. Attenuates IFN-beta (IFNB1)-triggered JAK/STAT signaling pathway in mouse dendritic cells. Functionally, (Microbial infection) Down-regulates TLR2-mediated host responses to infection by Borrelia burgdorferi and the production of the chemokine CCL3 by host dendritic cells. Down-regulates host responses to infection by B.burgdorferi and the production of IFNB1 by host dendritic cells. The chain is Salivary cystatin-L from Ixodes scapularis (Black-legged tick).